A 93-amino-acid polypeptide reads, in one-letter code: MSEEKAVSTEERGSRKVRTGYVVSDKMEKTIVVELEDRVKHPLYGKIIRRTSKVKAHDENGVAGIGDRVQLMETRPLSATKHWRLVEVLEKAK.

This sequence belongs to the universal ribosomal protein uS17 family. As to quaternary structure, part of the 30S ribosomal subunit.

Functionally, one of the primary rRNA binding proteins, it binds specifically to the 5'-end of 16S ribosomal RNA. This is Small ribosomal subunit protein uS17 from Rhodococcus jostii (strain RHA1).